Reading from the N-terminus, the 387-residue chain is S-adenosylmethionine synthase (387 aa).

Histidine 16 lines the ATP pocket. Position 18 (aspartate 18) interacts with Mg(2+). A K(+)-binding site is contributed by glutamate 44. Positions 57 and 100 each coordinate L-methionine. Residues 100 to 110 (QSPDIAQGVDR) are flexible loop. ATP-binding positions include 167 to 169 (DAK), 232 to 233 (RF), aspartate 241, 247 to 248 (RK), alanine 264, and lysine 268. Aspartate 241 contacts L-methionine. Lysine 272 serves as a coordination point for L-methionine.

The protein belongs to the AdoMet synthase family. As to quaternary structure, homotetramer; dimer of dimers. The cofactor is Mg(2+). K(+) is required as a cofactor.

The protein resides in the cytoplasm. The catalysed reaction is L-methionine + ATP + H2O = S-adenosyl-L-methionine + phosphate + diphosphate. It functions in the pathway amino-acid biosynthesis; S-adenosyl-L-methionine biosynthesis; S-adenosyl-L-methionine from L-methionine: step 1/1. Functionally, catalyzes the formation of S-adenosylmethionine (AdoMet) from methionine and ATP. The overall synthetic reaction is composed of two sequential steps, AdoMet formation and the subsequent tripolyphosphate hydrolysis which occurs prior to release of AdoMet from the enzyme. The polypeptide is S-adenosylmethionine synthase (Cupriavidus metallidurans (strain ATCC 43123 / DSM 2839 / NBRC 102507 / CH34) (Ralstonia metallidurans)).